A 152-amino-acid polypeptide reads, in one-letter code: 3-hydroxyacyl-[acyl-carrier-protein] dehydratase FabZ (152 aa).

His58 is an active-site residue.

The protein belongs to the thioester dehydratase family. FabZ subfamily.

The protein localises to the cytoplasm. The enzyme catalyses a (3R)-hydroxyacyl-[ACP] = a (2E)-enoyl-[ACP] + H2O. Functionally, involved in unsaturated fatty acids biosynthesis. Catalyzes the dehydration of short chain beta-hydroxyacyl-ACPs and long chain saturated and unsaturated beta-hydroxyacyl-ACPs. This chain is 3-hydroxyacyl-[acyl-carrier-protein] dehydratase FabZ, found in Synechococcus sp. (strain RCC307).